The sequence spans 177 residues: ECF RNA polymerase sigma factor SigL (177 aa).

The segment at L18–R85 is sigma-70 factor domain-2. An Interaction with polymerase core subunit RpoC motif is present at residues D42 to Q45. The interval A119–R167 is sigma-70 factor domain-4. The segment at residues T141–H160 is a DNA-binding region (H-T-H motif).

It belongs to the sigma-70 factor family. ECF subfamily. As to quaternary structure, interacts transiently with the RNA polymerase catalytic core formed by RpoA, RpoB, RpoC and RpoZ (2 alpha, 1 beta, 1 beta' and 1 omega subunit) to form the RNA polymerase holoenzyme that can initiate transcription. Interacts (via sigma-70 factor domain 4) with anti-sigma-L factor RslA.

Its function is as follows. Sigma factors are initiation factors that promote the attachment of RNA polymerase to specific initiation sites and are then released. Extracytoplasmic function (ECF) sigma factors are held in an inactive form by an anti-sigma factor until released by regulated intramembrane proteolysis. The protein is ECF RNA polymerase sigma factor SigL (sigL) of Mycobacterium tuberculosis (strain ATCC 35801 / TMC 107 / Erdman).